We begin with the raw amino-acid sequence, 655 residues long: Gastrulation defective protein 1 homolog (655 aa).

Disordered regions lie at residues 1–54 and 83–165; these read MQRG…EQMI and AKVF…DEQS. Basic and acidic residues-rich tracts occupy residues 23 to 36, 91 to 115, and 134 to 146; these read RSNE…KEST, QIEK…KEDD, and TDKE…SSKD. Over residues 147–164 the composition is skewed to acidic residues; sequence EDSDDDDYSSDEDSDDEQ. WD repeat units lie at residues 180-219, 227-268, 281-321, 330-369, 377-416, 422-467, and 470-510; these read HGSR…SSMR, CENH…ECCK, GHVA…EQLQ, GLRT…VNTT, QKGS…QPLH, FSRY…EVQR, and VSNA…RGAK. 2 disordered regions span residues 544 to 580 and 633 to 655; these read KSRT…VASS and AIFS…EADK. Basic and acidic residues-rich tracts occupy residues 554–564 and 639–655; these read KARMDPVKSQR and LPAD…EADK.

This sequence belongs to the WD repeat GAD-1 family.

The polypeptide is Gastrulation defective protein 1 homolog (Drosophila melanogaster (Fruit fly)).